Here is a 391-residue protein sequence, read N- to C-terminus: Chorismate synthase (391 aa).

R48 lines the NADP(+) pocket. FMN contacts are provided by residues 126–128 (RAS), G286, 301–305 (KPTSS), and R328.

It belongs to the chorismate synthase family. It depends on FMNH2 as a cofactor.

The enzyme catalyses 5-O-(1-carboxyvinyl)-3-phosphoshikimate = chorismate + phosphate. It functions in the pathway metabolic intermediate biosynthesis; chorismate biosynthesis; chorismate from D-erythrose 4-phosphate and phosphoenolpyruvate: step 7/7. Functionally, catalyzes the anti-1,4-elimination of the C-3 phosphate and the C-6 proR hydrogen from 5-enolpyruvylshikimate-3-phosphate (EPSP) to yield chorismate, which is the branch point compound that serves as the starting substrate for the three terminal pathways of aromatic amino acid biosynthesis. This reaction introduces a second double bond into the aromatic ring system. This chain is Chorismate synthase, found in Saccharolobus islandicus (strain M.16.27) (Sulfolobus islandicus).